Consider the following 98-residue polypeptide: UPF0235 protein Asuc_1977 (98 aa).

This sequence belongs to the UPF0235 family.

The sequence is that of UPF0235 protein Asuc_1977 from Actinobacillus succinogenes (strain ATCC 55618 / DSM 22257 / CCUG 43843 / 130Z).